We begin with the raw amino-acid sequence, 590 residues long: Aspartate--tRNA ligase (590 aa).

Glu-174 contacts L-aspartate. The aspartate stretch occupies residues 198-201 (QLMK). Arg-220 is a binding site for L-aspartate. ATP is bound by residues 220-222 (RDE) and Gln-229. His-443 is a binding site for L-aspartate. Residue Glu-484 participates in ATP binding. Arg-491 contacts L-aspartate. 536-539 (GLDR) serves as a coordination point for ATP.

Belongs to the class-II aminoacyl-tRNA synthetase family. Type 1 subfamily. In terms of assembly, homodimer.

The protein resides in the cytoplasm. The catalysed reaction is tRNA(Asp) + L-aspartate + ATP = L-aspartyl-tRNA(Asp) + AMP + diphosphate. Its function is as follows. Catalyzes the attachment of L-aspartate to tRNA(Asp) in a two-step reaction: L-aspartate is first activated by ATP to form Asp-AMP and then transferred to the acceptor end of tRNA(Asp). The chain is Aspartate--tRNA ligase from Lactococcus lactis subsp. cremoris (strain SK11).